Here is a 317-residue protein sequence, read N- to C-terminus: MAPAMGNELQHRTVLLEEAVNALVTRVDGIYIDGTFGRGGHSRAVLAKLGEAGRLIAFDKDPLAIATAQQVADPRFEIVHESFASLRDAMSERAVGRVSGVLLDLGVSSPQFDDPERGFSFRADGPLDMRMDPTRGESAADWLARATVQEMTEVIRDYGEERFAFQIAKALVARRAESDRLGPLVSTGELAQIVANVVKTREKGKDPATRTFQAIRIHINQELAELQVVLEAALSLLEQGGRLVVISFHSLEDRIVKRFMQTHSSAPAVDRRLPIRAVDLPSPPLKLLGRVFASDEEVAANPRARSAVMRVAERIAP.

Residues 39–41, Asp-59, Phe-83, Asp-104, and Gln-111 each bind S-adenosyl-L-methionine; that span reads GGH.

Belongs to the methyltransferase superfamily. RsmH family.

Its subcellular location is the cytoplasm. It carries out the reaction cytidine(1402) in 16S rRNA + S-adenosyl-L-methionine = N(4)-methylcytidine(1402) in 16S rRNA + S-adenosyl-L-homocysteine + H(+). Specifically methylates the N4 position of cytidine in position 1402 (C1402) of 16S rRNA. In Paraburkholderia phymatum (strain DSM 17167 / CIP 108236 / LMG 21445 / STM815) (Burkholderia phymatum), this protein is Ribosomal RNA small subunit methyltransferase H.